We begin with the raw amino-acid sequence, 116 residues long: Neuropeptide Y receptor type 1 (116 aa).

Residues 1-6 (LVLIAV) form a helical membrane-spanning segment. The Cytoplasmic segment spans residues 7–24 (ERHQLIINPRGWRPSNRH). Residues 25–45 (AYVGIAVIWVLAVASSLPFLI) traverse the membrane as a helical segment. The Extracellular portion of the chain corresponds to 46–81 (YQVLTDEPFQNVTLDAFKDKYVCFDKFPSDSHRLSY). Asn56 carries an N-linked (GlcNAc...) asparagine glycan. The chain crosses the membrane as a helical span at residues 82-102 (TTLLLVLQYFGPLCFIFICYF). Over 103 to 116 (KIYIRLKRRNNMMD) the chain is Cytoplasmic.

This sequence belongs to the G-protein coupled receptor 1 family.

It is found in the cell membrane. Its function is as follows. Receptor for neuropeptide Y and peptide YY. The protein is Neuropeptide Y receptor type 1 (NPY1R) of Ovis aries (Sheep).